The following is a 1157-amino-acid chain: Myosin tail region-interacting protein MTI1 (1157 aa).

One can recognise an SH3 domain in the interval 5–69 (EVPFKVVAQF…PKSFVAVQGS (65 aa)). 2 disordered regions span residues 68–116 (GSEV…GPVP) and 135–156 (TAVSAQVQHDSSSGNGERKVPM). Polar residues predominate over residues 77-89 (SSPNTGSTEQRTI). Over residues 93–110 (VEQKDLPEPISPETKKET) the composition is skewed to basic and acidic residues. Serine 103 is modified (phosphoserine). Over residues 138-149 (SAQVQHDSSSGN) the composition is skewed to polar residues. Phosphoserine is present on residues serine 158 and serine 166. Disordered stretches follow at residues 231–256 (PEPINRAQVESGRIETENDQLKKDLP) and 284–888 (KKAK…PKVA). Coiled coils occupy residues 234-301 (INRA…NKNE) and 356-430 (EKEQ…GASR). Basic and acidic residues-rich tracts occupy residues 242–256 (GRIETENDQLKKDLP), 284–296 (KKAKLEQEHERSA), and 312–383 (NEKT…RGEN). Residues 398 to 411 (EGDNDEEKEEEDSE) show a composition bias toward acidic residues. Basic and acidic residues-rich tracts occupy residues 412–423 (ENRRAALRERMA) and 506–524 (KTLDPHATTEHEQKQEHGT). The segment covering 544 to 558 (DSDEDTDDHEFEDAN) has biased composition (acidic residues). Serine 565 carries the phosphoserine modification. Residues 574-585 (GNNESENVNSGE) show a composition bias toward low complexity. Basic and acidic residues predominate over residues 597–606 (RTAEVSHDIE). Residues 607 to 641 (NSSQNTTGNVLPVSSPQTRVARNGSINSLTKSISG) are compositionally biased toward polar residues. Phosphoserine occurs at positions 621, 631, and 634. Threonine 636 carries the post-translational modification Phosphothreonine. Phosphoserine occurs at positions 638 and 647. Over residues 642–653 (ENRRKSINEYHD) the composition is skewed to basic and acidic residues. The segment covering 654-668 (TVSTNSSALTETAQD) has biased composition (polar residues). Composition is skewed to pro residues over residues 691 to 738 (PHPV…PVSS) and 747 to 765 (SIPPVPPTPPAPPAPPAPL). A compositionally biased stretch (basic and acidic residues) spans 769–778 (KHNEVEEHVK). The segment covering 795 to 808 (NTAPPLPRAPPVPP) has biased composition (pro residues). The segment covering 832 to 853 (QNVTASTPSMMSTQQRVPTSVL) has biased composition (polar residues). Threonine 850 carries the phosphothreonine modification. Serine 889 carries the phosphoserine modification. Phosphothreonine occurs at positions 894 and 895. Residue lysine 1012 forms a Glycyl lysine isopeptide (Lys-Gly) (interchain with G-Cter in ubiquitin) linkage.

Binds to the SH3 domains of the type I myosins MYO3 and MYO5.

The protein resides in the cytoplasm. It is found in the cytoskeleton. Its subcellular location is the actin patch. Its function is as follows. Involved in the regulation of actin cytoskeleton. The chain is Myosin tail region-interacting protein MTI1 (BBC1) from Saccharomyces cerevisiae (strain ATCC 204508 / S288c) (Baker's yeast).